The primary structure comprises 89 residues: Small ribosomal subunit protein uS15 (89 aa).

It belongs to the universal ribosomal protein uS15 family. In terms of assembly, part of the 30S ribosomal subunit. Forms a bridge to the 50S subunit in the 70S ribosome, contacting the 23S rRNA.

Functionally, one of the primary rRNA binding proteins, it binds directly to 16S rRNA where it helps nucleate assembly of the platform of the 30S subunit by binding and bridging several RNA helices of the 16S rRNA. Forms an intersubunit bridge (bridge B4) with the 23S rRNA of the 50S subunit in the ribosome. The protein is Small ribosomal subunit protein uS15 of Limosilactobacillus reuteri (strain DSM 20016) (Lactobacillus reuteri).